Reading from the N-terminus, the 487-residue chain is Glycogen synthase 2 (487 aa).

Residue lysine 12 participates in ADP-alpha-D-glucose binding.

Belongs to the glycosyltransferase 1 family. Bacterial/plant glycogen synthase subfamily.

It catalyses the reaction [(1-&gt;4)-alpha-D-glucosyl](n) + ADP-alpha-D-glucose = [(1-&gt;4)-alpha-D-glucosyl](n+1) + ADP + H(+). It functions in the pathway glycan biosynthesis; glycogen biosynthesis. Synthesizes alpha-1,4-glucan chains using ADP-glucose. The protein is Glycogen synthase 2 of Methylococcus capsulatus (strain ATCC 33009 / NCIMB 11132 / Bath).